Here is an 868-residue protein sequence, read N- to C-terminus: Leucine-rich repeat receptor-like serine/threonine-protein kinase At2g14510 (868 aa).

The first 23 residues, 1-23 (METRNKFMLLACATFSIMSLVKS), serve as a signal peptide directing secretion. The Extracellular portion of the chain corresponds to 24 to 510 (QNQQGFISLD…KHQPKSWLVA (487 aa)). Residues N48, N68, N231, N235, N258, N291, N433, and N446 are each glycosylated (N-linked (GlcNAc...) asparagine). LRR repeat units lie at residues 412–435 (RIIS…QNLT), 436–458 (MLRE…LATI), and 460–482 (PLLV…LQDR). N-linked (GlcNAc...) asparagine glycosylation occurs at N495. Residues 511–531 (IVASISCVAVTIIVLVLIFIF) traverse the membrane as a helical segment. The Cytoplasmic portion of the chain corresponds to 532–868 (RRRKSSTRKV…TFISDIPSAR (337 aa)). Residues 563-832 (NNFEVVLGKG…NMTRVAHELN (270 aa)) enclose the Protein kinase domain. Residues 569–577 (LGKGGFGVV) and K590 contribute to the ATP site. Y635 bears the Phosphotyrosine mark. D687 (proton acceptor) is an active-site residue. The residue at position 721 (S721) is a Phosphoserine. Phosphothreonine is present on residues T722 and T727. Y735 bears the Phosphotyrosine mark.

This sequence belongs to the protein kinase superfamily. Ser/Thr protein kinase family.

Its subcellular location is the cell membrane. It carries out the reaction L-seryl-[protein] + ATP = O-phospho-L-seryl-[protein] + ADP + H(+). The catalysed reaction is L-threonyl-[protein] + ATP = O-phospho-L-threonyl-[protein] + ADP + H(+). The protein is Leucine-rich repeat receptor-like serine/threonine-protein kinase At2g14510 of Arabidopsis thaliana (Mouse-ear cress).